A 307-amino-acid chain; its full sequence is Malate dehydrogenase (307 aa).

NAD(+)-binding positions include 8–13 and Asp-32; that span reads GAGNVG. Residues Arg-81 and Arg-87 each coordinate substrate. NAD(+) contacts are provided by residues Asn-94 and 117–119; that span reads VSN. Residues Asn-119 and Arg-150 each coordinate substrate. The active-site Proton acceptor is the His-174.

Belongs to the LDH/MDH superfamily. MDH type 3 family.

It catalyses the reaction (S)-malate + NAD(+) = oxaloacetate + NADH + H(+). Functionally, catalyzes the reversible oxidation of malate to oxaloacetate. The chain is Malate dehydrogenase from Dehalococcoides mccartyi (strain CBDB1).